The chain runs to 157 residues: Ribosome maturation factor RimP (157 aa).

This sequence belongs to the RimP family.

The protein resides in the cytoplasm. In terms of biological role, required for maturation of 30S ribosomal subunits. In Lactococcus lactis subsp. cremoris (strain MG1363), this protein is Ribosome maturation factor RimP.